A 1223-amino-acid polypeptide reads, in one-letter code: DNA-directed RNA polymerase subunit beta'' (1223 aa).

Positions 233, 307, 314, and 317 each coordinate Zn(2+).

This sequence belongs to the RNA polymerase beta' chain family. RpoC2 subfamily. In terms of assembly, in plastids the minimal PEP RNA polymerase catalytic core is composed of four subunits: alpha, beta, beta', and beta''. When a (nuclear-encoded) sigma factor is associated with the core the holoenzyme is formed, which can initiate transcription. Zn(2+) is required as a cofactor.

The protein resides in the plastid. It localises to the chloroplast. It carries out the reaction RNA(n) + a ribonucleoside 5'-triphosphate = RNA(n+1) + diphosphate. Functionally, DNA-dependent RNA polymerase catalyzes the transcription of DNA into RNA using the four ribonucleoside triphosphates as substrates. The sequence is that of DNA-directed RNA polymerase subunit beta'' from Mesostigma viride (Green alga).